The following is a 500-amino-acid chain: Perfringolysin O (500 aa).

A signal peptide spans 1–28 (MIRFKKTKLIASIAMALCLFSQPVISFS). A run of 4 beta stranded transmembrane segments spans residues 189–202 (KSQISSALNVNAKV), 209–218 (VDFNAVANNE), 287–296 (SKDVQAAFKA), and 304–316 (KNSQQYKDIYENS). Positions 458–468 (ECTGLAWEWWR) match the Conserved undecapeptide motif. Residues 490 to 491 (TL) carry the Cholesterol binding motif.

It belongs to the cholesterol-dependent cytolysin family. Modeling based on cryo-EM shows a homooligomeric pore complex containing 38-44 subunits; when inserted in the host membrane.

The protein resides in the secreted. It localises to the host cell membrane. Functionally, a cholesterol-dependent toxin that causes cytolysis by forming pores in cholesterol-containing host membranes. After binding to target membranes, the protein assembles into a pre-pore complex. A major conformational change leads to insertion in the host membrane and formation of an oligomeric pore complex. Cholesterol is required for binding to host cell membranes, membrane insertion and pore formation; cholesterol binding is mediated by a Thr-Leu pair in the C-terminus. Can be reversibly inactivated by oxidation. The protein is Perfringolysin O (pfo) of Clostridium perfringens (strain 13 / Type A).